Here is a 586-residue protein sequence, read N- to C-terminus: MLMRMSTLFLRTLREDPVEAEVASHKLLVRAGYVRRAAPGIYTWLPLGLKVLRKVEQVVREEMDAAGAQEVHFPALLPREPYEATNRWSDYGDGIFKLKDRKGADYLLAPTHEEMFTLLVKDLYSSYKDLPLSIYQIQTKYRDEARPRAGIIRGREFTMKDSYSFDVDDAGLERSYELHRQAYVRIFERLGLDFVIVSAVSGAMGGSRSEEFLHPTAIGEDTFVRSPGGYAANAEAVTTLAPPAVPFDGLPAAHVEDTPDTPTIETLVAVSNEKHPRADRPWTAADTLKNVFVVLRHPDGTREPLAVGVPGDREVDPKRLEAAVSPAEVEAFEAADFAKHPALVKGYIGPGVLGTEGASGIRYLVDPRVVDGTAWITGADAEGRHVFDLVAGRDFTPDGFVEAAEVKAGDPAPDGSGPLELARGIEIAHIFALGRRFAQALDLKVLDENGKQVVVTMGSYGVGVTRALACVAEGNHDEKGLVWPRALAPADVHVVATGKDPEIFATAERLAGELVAQGLEVLYDDRPKVSPGVKFKDAELIGVPTILVVGKGLAEGLVELKDRRSGDSEQVALDDAVSRVATAVRG.

The protein belongs to the class-II aminoacyl-tRNA synthetase family. ProS type 1 subfamily. In terms of assembly, homodimer.

The protein resides in the cytoplasm. The catalysed reaction is tRNA(Pro) + L-proline + ATP = L-prolyl-tRNA(Pro) + AMP + diphosphate. Functionally, catalyzes the attachment of proline to tRNA(Pro) in a two-step reaction: proline is first activated by ATP to form Pro-AMP and then transferred to the acceptor end of tRNA(Pro). As ProRS can inadvertently accommodate and process non-cognate amino acids such as alanine and cysteine, to avoid such errors it has two additional distinct editing activities against alanine. One activity is designated as 'pretransfer' editing and involves the tRNA(Pro)-independent hydrolysis of activated Ala-AMP. The other activity is designated 'posttransfer' editing and involves deacylation of mischarged Ala-tRNA(Pro). The misacylated Cys-tRNA(Pro) is not edited by ProRS. The protein is Proline--tRNA ligase of Kineococcus radiotolerans (strain ATCC BAA-149 / DSM 14245 / SRS30216).